The chain runs to 477 residues: Ketoisovalerate oxidoreductase subunit VorA (477 aa).

As to quaternary structure, heterotrimer of the VorA, VorB and VorC subunits.

The enzyme catalyses 3-methyl-2-oxobutanoate + 2 oxidized [2Fe-2S]-[ferredoxin] + CoA = 2-methylpropanoyl-CoA + 2 reduced [2Fe-2S]-[ferredoxin] + CO2 + H(+). The polypeptide is Ketoisovalerate oxidoreductase subunit VorA (vorA) (Methanothermobacter thermautotrophicus (strain ATCC 29096 / DSM 1053 / JCM 10044 / NBRC 100330 / Delta H) (Methanobacterium thermoautotrophicum)).